Here is a 427-residue protein sequence, read N- to C-terminus: GTPase Obg (427 aa).

The region spanning 1–158 (MFVDIAKIYV…LWVILELKVL (158 aa)) is the Obg domain. The OBG-type G domain occupies 159–330 (ADVGLIGYPN…VLKRAYELLK (172 aa)). GTP contacts are provided by residues 165-172 (GYPNVGKS), 190-194 (FTTKY), 212-215 (DIPG), 282-285 (NKMD), and 311-313 (SAA). Mg(2+)-binding residues include Ser-172 and Thr-192. In terms of domain architecture, OCT spans 347–427 (FVYYKKKDVK…ILDVEFEYYE (81 aa)).

This sequence belongs to the TRAFAC class OBG-HflX-like GTPase superfamily. OBG GTPase family. In terms of assembly, monomer. The cofactor is Mg(2+).

Its subcellular location is the cytoplasm. Functionally, an essential GTPase which binds GTP, GDP and possibly (p)ppGpp with moderate affinity, with high nucleotide exchange rates and a fairly low GTP hydrolysis rate. Plays a role in control of the cell cycle, stress response, ribosome biogenesis and in those bacteria that undergo differentiation, in morphogenesis control. This Caldicellulosiruptor bescii (strain ATCC BAA-1888 / DSM 6725 / KCTC 15123 / Z-1320) (Anaerocellum thermophilum) protein is GTPase Obg.